The chain runs to 241 residues: Acyl-protein thioesterase 1 (241 aa).

Residues Ser-122, Asp-178, and His-211 each act as charge relay system in the active site.

This sequence belongs to the AB hydrolase superfamily. AB hydrolase 2 family.

It localises to the cytoplasm. The protein resides in the nucleus. The enzyme catalyses S-hexadecanoyl-L-cysteinyl-[protein] + H2O = L-cysteinyl-[protein] + hexadecanoate + H(+). Hydrolyzes fatty acids from S-acylated cysteine residues in proteins with a strong preference for palmitoylated G-alpha proteins over other acyl substrates. Mediates the deacylation of G-alpha proteins such as GPA1 in vivo, but has weak or no activity toward palmitoylated Ras proteins. Has weak lysophospholipase activity in vitro; however such activity may not exist in vivo. The chain is Acyl-protein thioesterase 1 from Aspergillus fumigatus (strain ATCC MYA-4609 / CBS 101355 / FGSC A1100 / Af293) (Neosartorya fumigata).